The sequence spans 593 residues: Tyrosine-protein phosphatase non-receptor type 11 (593 aa).

SH2 domains lie at 6–102 and 112–216; these read WFHP…KYPL and WFHG…KQPL. The Tyrosine-protein phosphatase domain maps to 247–521; that stretch reads FWEEFETLQQ…RFIYMAVQHY (275 aa). Substrate-binding positions include Asp425, 459–465, and Gln506; that span reads CSAGIGR. The Phosphocysteine intermediate role is filled by Cys459. Residues 548–557 are compositionally biased toward polar residues; sequence SLSDQTSGDQ. A disordered region spans residues 548–575; that stretch reads SLSDQTSGDQSPLPPCTPTPTCPEMRED. The span at 559-568 shows a compositional bias: pro residues; that stretch reads PLPPCTPTPT.

Belongs to the protein-tyrosine phosphatase family. Non-receptor class 2 subfamily. In terms of processing, phosphorylated by tyrosine-protein kinases. Expressed in embryonic fibroblast, hematopoietic, erythroid, myeloid and lymphoid cells.

Its subcellular location is the cytoplasm. It carries out the reaction O-phospho-L-tyrosyl-[protein] + H2O = L-tyrosyl-[protein] + phosphate. In terms of biological role, this PTPase activity may directly link growth factor receptors and other signaling proteins through protein-tyrosine phosphorylation. The SH2 regions may interact with other cellular components to modulate its own phosphatase activity against interacting substrates. May play a positive role during the stages of erythroid cell proliferation. In Gallus gallus (Chicken), this protein is Tyrosine-protein phosphatase non-receptor type 11 (PTPN11).